The chain runs to 139 residues: Plastocyanin (139 aa).

The signal sequence occupies residues 1-34 (MKLISASLRRFSLAVLTILLVVSSFAVFTPSASA). Residues 35 to 139 (ETYQVKLGTD…GMVGTITVQG (105 aa)) enclose the Plastocyanin-like domain. Residues H73, C123, H126, and M131 each contribute to the Cu cation site.

It belongs to the plastocyanin family. Requires Cu(2+) as cofactor.

It is found in the cellular thylakoid membrane. Participates in electron transfer between P700 and the cytochrome b6-f complex in photosystem I. In Nostoc punctiforme (strain ATCC 29133 / PCC 73102), this protein is Plastocyanin.